A 376-amino-acid polypeptide reads, in one-letter code: MSTVPPPLSVLLELTHRCPLACPYCSNPIALAALREEMDTAGWRSLLEQAAEMGVLQAHFSGGEPMLRKDLPELVAHARALGLYSNLITSGVAGGEPMLDQLQAAGLEHVQLSVQDVDPAGADHIAGYRNSLSKKRAFAAAVRARGLPLTLNAVIHRHNAERVPGMIALALEWGAERIEVAHTQYYGWGLRNRAALMPSREQLAATIVAVETARRSLGDQLAIDFVTPDYYARQPKPCMGGWAQRFVNISPRGDVLPCHAAETIDGLQFDNLRDRSLADIWNHGEAFARFRGTAWMPEVCQGCPKREIDWGGCRCQALALAGDAATLDPVCERSPAHAGIRATAEREAASPAPDFVYRRPERPAAVAAEAAISDTE.

Residues 4 to 219 form the Radical SAM core domain; it reads VPPPLSVLLE…VETARRSLGD (216 aa). Residues cysteine 18, cysteine 22, and cysteine 25 each contribute to the [4Fe-4S] cluster site.

The protein belongs to the radical SAM superfamily. PqqE family. As to quaternary structure, interacts with PqqD. The interaction is necessary for activity of PqqE. [4Fe-4S] cluster is required as a cofactor.

It catalyses the reaction [PQQ precursor protein] + S-adenosyl-L-methionine = E-Y cross-linked-[PQQ precursor protein] + 5'-deoxyadenosine + L-methionine + H(+). The protein operates within cofactor biosynthesis; pyrroloquinoline quinone biosynthesis. Its function is as follows. Catalyzes the cross-linking of a glutamate residue and a tyrosine residue in the PqqA protein as part of the biosynthesis of pyrroloquinoline quinone (PQQ). This Xanthomonas campestris pv. campestris (strain 8004) protein is PqqA peptide cyclase.